We begin with the raw amino-acid sequence, 62 residues long: uncharacterized protein (62 aa).

Residues 15 to 37 (FSSGVLISNFLLFNFIIISHSSL) form a helical membrane-spanning segment. A compositionally biased stretch (low complexity) spans 41–56 (TTTTTTTTTTTTNTKS). Positions 41–62 (TTTTTTTTTTTTNTKSTLHRSG) are disordered.

Its subcellular location is the membrane. This is an uncharacterized protein from Dictyostelium discoideum (Social amoeba).